The chain runs to 396 residues: Purine ribonucleoside efflux pump NepI (396 aa).

Residues 1–21 lie on the Cytoplasmic side of the membrane; it reads MSEFIAENRGANAITRPNWSA. The helical transmembrane segment at 22–42 threads the bilayer; the sequence is VFSVAFCVACLIIVEFLPVSL. The Periplasmic portion of the chain corresponds to 43–54; that stretch reads LTPMAQDLGISE. Residues 55 to 75 form a helical membrane-spanning segment; the sequence is GVAGQSVTVTAFVAMFASLFI. Over 76–85 the chain is Cytoplasmic; that stretch reads TQTIQATDRR. Residues 86–106 traverse the membrane as a helical segment; the sequence is YVVILFAVLLTLSCLLVSFAN. Residue Ser107 is a topological domain, periplasmic. Residues 108–128 form a helical membrane-spanning segment; it reads FSLLLIGRACLGVALGGFWAI. At 129–147 the chain is on the cytoplasmic side; the sequence is SASLTMRLVPPRTVPKALS. The helical transmembrane segment at 148–168 threads the bilayer; the sequence is VIFGAVSIALVIAAPLGSFLG. At 169–175 the chain is on the periplasmic side; it reads ELIGWRN. The chain crosses the membrane as a helical span at residues 176 to 196; that stretch reads VFNAAAAMGVLCIFWIIKSLP. Topologically, residues 197-215 are cytoplasmic; sequence SLPGEPSHQKQNTFRLLQR. A helical transmembrane segment spans residues 216–236; that stretch reads PGVMAGMIAIFMSFAGQFAFF. Residues 237 to 255 are Periplasmic-facing; that stretch reads TYIRPVYMNLAGFGVDGLT. Residues 256 to 276 form a helical membrane-spanning segment; the sequence is LVLLSFGIASFVGTSLSSFIL. The Cytoplasmic segment spans residues 277–281; the sequence is KRSVK. A helical transmembrane segment spans residues 282–302; that stretch reads LALAGAPFVLALSALVLTLWG. Residues 303–305 lie on the Periplasmic side of the membrane; sequence SDK. The chain crosses the membrane as a helical span at residues 306–326; that stretch reads IVATGVAIIWGLTFALIPVGW. Residues 327 to 343 are Cytoplasmic-facing; the sequence is STWITRSLADQAEKAGS. The chain crosses the membrane as a helical span at residues 344-364; that stretch reads IQVAVIQLANTCGAAIGGYAL. Topologically, residues 365-366 are periplasmic; it reads DN. The chain crosses the membrane as a helical span at residues 367 to 387; that stretch reads IGLTSPLMLSGTLMLLTALLV. Over 388 to 396 the chain is Cytoplasmic; the sequence is TAKVKMKKS.

It belongs to the major facilitator superfamily. DHA1 family. NepI (TC 2.A.1.2.26) subfamily.

It localises to the cell inner membrane. The enzyme catalyses inosine(in) + H(+)(out) = inosine(out) + H(+)(in). It catalyses the reaction guanosine(in) + H(+)(out) = guanosine(out) + H(+)(in). Functionally, involved in the efflux of purine ribonucleosides, such as inosine and guanosine. This chain is Purine ribonucleoside efflux pump NepI, found in Escherichia coli O6:K15:H31 (strain 536 / UPEC).